Here is a 1302-residue protein sequence, read N- to C-terminus: Phosphoribosylformylglycinamidine synthase (1302 aa).

Residues 307–318 and Ala-678 contribute to the ATP site; that span reads GASTGSGGEIRD. The Mg(2+) site is built by Glu-718, Asn-722, and Asp-891. One can recognise a Glutamine amidotransferase type-1 domain in the interval 1049–1302; sequence MAILREQGVN…MFQNARKNIG (254 aa). Cys-1142 serves as the catalytic Nucleophile. Catalysis depends on residues His-1267 and Glu-1269.

In the N-terminal section; belongs to the FGAMS family. In terms of assembly, monomer.

It is found in the cytoplasm. It catalyses the reaction N(2)-formyl-N(1)-(5-phospho-beta-D-ribosyl)glycinamide + L-glutamine + ATP + H2O = 2-formamido-N(1)-(5-O-phospho-beta-D-ribosyl)acetamidine + L-glutamate + ADP + phosphate + H(+). Its pathway is purine metabolism; IMP biosynthesis via de novo pathway; 5-amino-1-(5-phospho-D-ribosyl)imidazole from N(2)-formyl-N(1)-(5-phospho-D-ribosyl)glycinamide: step 1/2. In terms of biological role, phosphoribosylformylglycinamidine synthase involved in the purines biosynthetic pathway. Catalyzes the ATP-dependent conversion of formylglycinamide ribonucleotide (FGAR) and glutamine to yield formylglycinamidine ribonucleotide (FGAM) and glutamate. The sequence is that of Phosphoribosylformylglycinamidine synthase from Vibrio parahaemolyticus serotype O3:K6 (strain RIMD 2210633).